We begin with the raw amino-acid sequence, 301 residues long: Methionyl-tRNA formyltransferase (301 aa).

109–112 (SLLP) is a (6S)-5,6,7,8-tetrahydrofolate binding site.

The protein belongs to the Fmt family.

The enzyme catalyses L-methionyl-tRNA(fMet) + (6R)-10-formyltetrahydrofolate = N-formyl-L-methionyl-tRNA(fMet) + (6S)-5,6,7,8-tetrahydrofolate + H(+). Its function is as follows. Attaches a formyl group to the free amino group of methionyl-tRNA(fMet). The formyl group appears to play a dual role in the initiator identity of N-formylmethionyl-tRNA by promoting its recognition by IF2 and preventing the misappropriation of this tRNA by the elongation apparatus. This is Methionyl-tRNA formyltransferase from Anaplasma marginale (strain St. Maries).